The primary structure comprises 21 residues: Hemocyanin subunit 1 (21 aa).

It belongs to the tyrosinase family. Hemocyanin subfamily. As to expression, hemolymph.

It localises to the secreted. The protein resides in the extracellular space. Hemocyanins are copper-containing oxygen carriers occurring freely dissolved in the hemolymph of many mollusks and arthropods. The polypeptide is Hemocyanin subunit 1 (Maja squinado (Mediterranean spider crab)).